The following is a 348-amino-acid chain: MSLPRFQRVNFGPYDNYIPVSELSKKSWNQQHFALLFPKPQRPGTKRRSKPSQIRDNTVSIIDEEQLRGDRRQPLWMYRSLMRISERPSVYLAARRQPLKPTRTVEVDSKAAEIGKKGEDKTTQKDTTDSESELKQGKKDSKKGKDIEKGKEEKLDAKKDSKKGKKDAEKGKDSATESEDEKGGAKKDNKKDKKDSNKGKDSATESEGEKGGTEKDSKKGKKDSKKGKDSAIELQAVKADEKKDEDGKKDANKGDESKDAKKDAKEIKKGKKDKKKPSSTDSDSKDDVKKESKKDATKDAKKVAKKDTEKESADSKKDAKKNAKKDAKKDAKKNAKKDEKKDAKKKGK.

The interval 25 to 347 (KKSWNQQHFA…DEKKDAKKKG (323 aa)) is 31 X 3 AA repeats of K-K-X. Disordered regions lie at residues 35 to 59 (LLFPKPQRPGTKRRSKPSQIRDNTV) and 101 to 348 (PTRT…KKGK). Basic and acidic residues-rich tracts occupy residues 103-159 (RTVE…DAKK), 166-217 (KDAE…EKDS), 238-267 (KADEKKDEDGKKDANKGDESKDAKKDAKEI), and 276-342 (KPSS…EKKD). 3 repeat units span residues 157–184 (AKKDSKKGKKDAEKGKDSATESEDEKGG), 185–212 (AKKDNKKDKKDSNKGKDSATESEGEKGG), and 213–240 (TEKDSKKGKKDSKKGKDSAIELQAVKAD). Residues 157 to 240 (AKKDSKKGKK…AIELQAVKAD (84 aa)) form a 3 X approximate tandem repeats region.

Testis.

The protein resides in the cytoplasm. It localises to the cytoskeleton. Its subcellular location is the perinuclear theca. The protein localises to the calyx. Functionally, plays a role in the establishment of normal sperm morphology during spermatogenesis. It is required for acrosome attachment to the nuclear envelope, and proper manchette elongation and disassembly. This chain is Cylicin-2 (CYLC2), found in Homo sapiens (Human).